Reading from the N-terminus, the 216-residue chain is V-type ATP synthase subunit D (216 aa).

The protein belongs to the V-ATPase D subunit family.

Its function is as follows. Produces ATP from ADP in the presence of a proton gradient across the membrane. The polypeptide is V-type ATP synthase subunit D (Clostridium botulinum (strain Loch Maree / Type A3)).